Here is a 272-residue protein sequence, read N- to C-terminus: 3-methyl-2-oxobutanoate hydroxymethyltransferase (272 aa).

Positions 51 and 90 each coordinate Mg(2+). Residues 51-52, aspartate 90, and lysine 119 contribute to the 3-methyl-2-oxobutanoate site; that span reads DS. A Mg(2+)-binding site is contributed by glutamate 121. The active-site Proton acceptor is glutamate 188.

The protein belongs to the PanB family. Homodecamer; pentamer of dimers. Mg(2+) is required as a cofactor.

The protein localises to the cytoplasm. It catalyses the reaction 3-methyl-2-oxobutanoate + (6R)-5,10-methylene-5,6,7,8-tetrahydrofolate + H2O = 2-dehydropantoate + (6S)-5,6,7,8-tetrahydrofolate. It participates in cofactor biosynthesis; (R)-pantothenate biosynthesis; (R)-pantoate from 3-methyl-2-oxobutanoate: step 1/2. Its function is as follows. Catalyzes the reversible reaction in which hydroxymethyl group from 5,10-methylenetetrahydrofolate is transferred onto alpha-ketoisovalerate to form ketopantoate. This is 3-methyl-2-oxobutanoate hydroxymethyltransferase from Dechloromonas aromatica (strain RCB).